Here is a 178-residue protein sequence, read N- to C-terminus: Large ribosomal subunit protein bL25 (178 aa).

It belongs to the bacterial ribosomal protein bL25 family. CTC subfamily. In terms of assembly, part of the 50S ribosomal subunit; part of the 5S rRNA/L5/L18/L25 subcomplex. Contacts the 5S rRNA. Binds to the 5S rRNA independently of L5 and L18.

Its function is as follows. This is one of the proteins that binds to the 5S RNA in the ribosome where it forms part of the central protuberance. In Helicobacter pylori (strain G27), this protein is Large ribosomal subunit protein bL25.